The chain runs to 341 residues: Holliday junction branch migration complex subunit RuvB (341 aa).

The large ATPase domain (RuvB-L) stretch occupies residues 3–184 (DDFDIRDARM…FGINMHLEYY (182 aa)). ATP contacts are provided by residues leucine 23, arginine 24, glycine 65, lysine 68, threonine 69, threonine 70, 131–133 (EDY), arginine 174, tyrosine 184, and arginine 221. Mg(2+) is bound at residue threonine 69. Residues 185–255 (DMETLTKIVL…IACFSLEALN (71 aa)) are small ATPAse domain (RuvB-S). Positions 258-341 (RYGLDQIDNK…RVGEQGFLFD (84 aa)) are head domain (RuvB-H). DNA is bound by residues arginine 313 and arginine 318.

Belongs to the RuvB family. Homohexamer. Forms an RuvA(8)-RuvB(12)-Holliday junction (HJ) complex. HJ DNA is sandwiched between 2 RuvA tetramers; dsDNA enters through RuvA and exits via RuvB. An RuvB hexamer assembles on each DNA strand where it exits the tetramer. Each RuvB hexamer is contacted by two RuvA subunits (via domain III) on 2 adjacent RuvB subunits; this complex drives branch migration. In the full resolvosome a probable DNA-RuvA(4)-RuvB(12)-RuvC(2) complex forms which resolves the HJ.

It localises to the cytoplasm. The catalysed reaction is ATP + H2O = ADP + phosphate + H(+). Functionally, the RuvA-RuvB-RuvC complex processes Holliday junction (HJ) DNA during genetic recombination and DNA repair, while the RuvA-RuvB complex plays an important role in the rescue of blocked DNA replication forks via replication fork reversal (RFR). RuvA specifically binds to HJ cruciform DNA, conferring on it an open structure. The RuvB hexamer acts as an ATP-dependent pump, pulling dsDNA into and through the RuvAB complex. RuvB forms 2 homohexamers on either side of HJ DNA bound by 1 or 2 RuvA tetramers; 4 subunits per hexamer contact DNA at a time. Coordinated motions by a converter formed by DNA-disengaged RuvB subunits stimulates ATP hydrolysis and nucleotide exchange. Immobilization of the converter enables RuvB to convert the ATP-contained energy into a lever motion, pulling 2 nucleotides of DNA out of the RuvA tetramer per ATP hydrolyzed, thus driving DNA branch migration. The RuvB motors rotate together with the DNA substrate, which together with the progressing nucleotide cycle form the mechanistic basis for DNA recombination by continuous HJ branch migration. Branch migration allows RuvC to scan DNA until it finds its consensus sequence, where it cleaves and resolves cruciform DNA. The protein is Holliday junction branch migration complex subunit RuvB of Parabacteroides distasonis (strain ATCC 8503 / DSM 20701 / CIP 104284 / JCM 5825 / NCTC 11152).